A 567-amino-acid polypeptide reads, in one-letter code: R-linalool synthase QH1, chloroplastic (567 aa).

A chloroplast-targeting transit peptide spans 1-24 (GNAYMRIYSTKTTRITANATVNAA). Residues arginine 282, aspartate 319, aspartate 323, arginine 460, and aspartate 463 each coordinate (2E)-geranyl diphosphate. 2 residues coordinate Mg(2+): aspartate 319 and aspartate 323. The DDXXD motif signature appears at 319–323 (DDVYD). Aspartate 463, threonine 467, and glutamate 471 together coordinate Mg(2+).

The protein belongs to the terpene synthase family. Tpsb subfamily. It depends on Mg(2+) as a cofactor. Highly expressed in leaves and lower levels in inflorescences. Not detected in stems, stem epidermis, stem stele or roots.

The protein resides in the plastid. It localises to the chloroplast. The enzyme catalyses (2E)-geranyl diphosphate + H2O = (R)-linalool + diphosphate. It participates in secondary metabolite biosynthesis; terpenoid biosynthesis. In terms of biological role, monoterpene synthase that catalyzes the formation of (3R)-linalool from geranyl diphosphate, but not from isopentenyl diphosphate, dimethylallyl diphosphate, chrysanthemyl diphosphate, farnesyl diphosphate, (+)-copalyl diphosphate or geranylgeranyl diphosphate. The protein is R-linalool synthase QH1, chloroplastic (QH1) of Artemisia annua (Sweet wormwood).